Consider the following 537-residue polypeptide: Serendipity locus protein alpha (537 aa).

The protein localises to the cytoplasm. It localises to the cell membrane. Required for the cellularization of the syncytial blastoderm embryo. Involved in the localization of the actin filaments just prior to and during plasma membrane invagination. Sry-alpha together with nullo and bnk may provide auxiliary functions, by acting both to stabilize a large and dynamic microfilament structure and regulate its functions. The chain is Serendipity locus protein alpha (Sry-alpha) from Drosophila virilis (Fruit fly).